The primary structure comprises 166 residues: Large ribosomal subunit protein uL10 (166 aa).

It belongs to the universal ribosomal protein uL10 family. As to quaternary structure, part of the ribosomal stalk of the 50S ribosomal subunit. The N-terminus interacts with L11 and the large rRNA to form the base of the stalk. The C-terminus forms an elongated spine to which L12 dimers bind in a sequential fashion forming a multimeric L10(L12)X complex.

Its function is as follows. Forms part of the ribosomal stalk, playing a central role in the interaction of the ribosome with GTP-bound translation factors. In Listeria innocua serovar 6a (strain ATCC BAA-680 / CLIP 11262), this protein is Large ribosomal subunit protein uL10.